Consider the following 234-residue polypeptide: MATVKELKATARPSVGKGAARAERRAGRVPAVIYGDNKPPVTISLEDRELRLRILAGRFLTTVVDLDLDGTKHRVIPRDFHLDPVRDFPVHVDFLRLGEGATIRVSVPLHLKNSETAPGVKRGGTVNIVTHTVDLEAEADSIPQFIEADIGTLDIGTSLHLSDVVLPKGVKLVAAREDVTLVTIVPPSGFNEEQKAAAGAPAAAAPAAAAKAPAAGAKAPAAAAKAPAAPAKKK.

The protein belongs to the bacterial ribosomal protein bL25 family. CTC subfamily. As to quaternary structure, part of the 50S ribosomal subunit; part of the 5S rRNA/L5/L18/L25 subcomplex. Contacts the 5S rRNA. Binds to the 5S rRNA independently of L5 and L18.

In terms of biological role, this is one of the proteins that binds to the 5S RNA in the ribosome where it forms part of the central protuberance. The protein is Large ribosomal subunit protein bL25 of Rhodopseudomonas palustris (strain BisA53).